The primary structure comprises 366 residues: 3-dehydroquinate synthase (366 aa).

NAD(+)-binding positions include 74–79 (SGEAAK), 108–112 (GVVGD), 132–133 (TT), lysine 144, lysine 153, and 171–174 (FLRT). Positions 186, 249, and 266 each coordinate Zn(2+).

The protein belongs to the sugar phosphate cyclases superfamily. Dehydroquinate synthase family. It depends on Co(2+) as a cofactor. Requires Zn(2+) as cofactor. NAD(+) serves as cofactor.

Its subcellular location is the cytoplasm. The enzyme catalyses 7-phospho-2-dehydro-3-deoxy-D-arabino-heptonate = 3-dehydroquinate + phosphate. The protein operates within metabolic intermediate biosynthesis; chorismate biosynthesis; chorismate from D-erythrose 4-phosphate and phosphoenolpyruvate: step 2/7. In terms of biological role, catalyzes the conversion of 3-deoxy-D-arabino-heptulosonate 7-phosphate (DAHP) to dehydroquinate (DHQ). The protein is 3-dehydroquinate synthase of Geobacillus kaustophilus (strain HTA426).